We begin with the raw amino-acid sequence, 593 residues long: Mitoguardin 2 (593 aa).

The next 2 helical transmembrane spans lie at M11–G31 and P42–A62. Disordered stretches follow at residues G103–M141 and S196–K231. Low complexity-rich tracts occupy residues S106–S116 and I123–M141. S132 carries the post-translational modification Phosphoserine. A Phosphothreonine modification is found at T206. Phosphoserine occurs at positions 220, 224, and 228. A Phosphothreonine modification is found at T273. 2 positions are modified to phosphoserine: S276 and S295. An FFAT motif is present at residues S292 to E298.

It belongs to the mitoguardin family. In terms of assembly, homodimer and heterodimer; forms heterodimers with MIGA1. Interacts with PLD6/MitoPLD. Interacts (via phosphorylated FFAT motif) with MOSPD2, VAPA and VAPB. Post-translationally, phosphorylation at Ser-295 of the FFAT motif activates interaction with MOSPD2, VAPA and VAPB.

Its subcellular location is the mitochondrion outer membrane. In terms of biological role, regulator of mitochondrial fusion: acts by forming homo- and heterodimers at the mitochondrial outer membrane and facilitating the formation of PLD6/MitoPLD dimers. May act by regulating phospholipid metabolism via PLD6/MitoPLD. The protein is Mitoguardin 2 of Homo sapiens (Human).